We begin with the raw amino-acid sequence, 216 residues long: Ribose-5-phosphate isomerase A (216 aa).

Substrate contacts are provided by residues 26 to 29 (TGST), 79 to 82 (DGAD), and 92 to 95 (KGGG). The active-site Proton acceptor is Glu101. Substrate is bound at residue Lys119.

Belongs to the ribose 5-phosphate isomerase family. In terms of assembly, homodimer.

It catalyses the reaction aldehydo-D-ribose 5-phosphate = D-ribulose 5-phosphate. It participates in carbohydrate degradation; pentose phosphate pathway; D-ribose 5-phosphate from D-ribulose 5-phosphate (non-oxidative stage): step 1/1. Catalyzes the reversible conversion of ribose-5-phosphate to ribulose 5-phosphate. This Legionella pneumophila (strain Lens) protein is Ribose-5-phosphate isomerase A.